A 352-amino-acid polypeptide reads, in one-letter code: Zinc transporter 1 (352 aa).

The first 29 residues, 1–29 (MARTMTMRVSSLLVAVVLLAALSFQACSG), serve as a signal peptide directing secretion. Topologically, residues 30 to 56 (HGGINDGDGQVDAPATPASSSGVRSKG) are extracellular. A helical transmembrane segment spans residues 57-77 (LIAVKVWCLVILLVFTFAGGV). Residues 78-87 (SPYFYRWNES) lie on the Cytoplasmic side of the membrane. Residues 88–108 (FLLLGTQFAAGVFLGTALMHF) traverse the membrane as a helical segment. Topologically, residues 109 to 127 (LADSTSTFKGLTTNQYPFS) are extracellular. The chain crosses the membrane as a helical span at residues 128-148 (FMLTCVGFLLTMLSDLVIAAV). The Cytoplasmic segment spans residues 149–200 (ARRSAAAGVSDNQVSEQQQRQQAEGAVMSRKEEEAAAVAHPAMLVRTSSFED). A helical transmembrane segment spans residues 201 to 221 (AVLLIVALCFHSVFEGIAIGV). The Extracellular segment spans residues 222-230 (SASKSEAWR). A helical membrane pass occupies residues 231–251 (NLWTIGLHKIFAAVAMGIALL). Over 252–262 (RMIPKRPFLMT) the chain is Cytoplasmic. The chain crosses the membrane as a helical span at residues 263 to 283 (VVYSLAFAVSSPVGVGIGIAI). Residues 284–296 (DATSQGRAADWTY) are Extracellular-facing. A helical transmembrane segment spans residues 297-317 (AISMGLATGVFIYVAINHLIA). The Cytoplasmic portion of the chain corresponds to 318 to 330 (KGYRPHHPTAADK). Residues 331–351 (PLFKFLAVLLGVAVMAVVMIW) traverse the membrane as a helical segment. A topological domain (extracellular) is located at residue D352.

It belongs to the ZIP transporter (TC 2.A.5) family. Expressed in vascular bundles of roots and leaves.

The protein resides in the cell membrane. Functionally, zinc transporter that may mediate zinc uptake from the rhizosphere. May also transport other divalent cations. The sequence is that of Zinc transporter 1 (ZIP1) from Oryza sativa subsp. japonica (Rice).